We begin with the raw amino-acid sequence, 227 residues long: tRNA (guanine-N(1)-)-methyltransferase (227 aa).

Residues Gly112 and 131–136 (LGDFVL) each bind S-adenosyl-L-methionine.

Belongs to the RNA methyltransferase TrmD family. As to quaternary structure, homodimer.

The protein localises to the cytoplasm. It catalyses the reaction guanosine(37) in tRNA + S-adenosyl-L-methionine = N(1)-methylguanosine(37) in tRNA + S-adenosyl-L-homocysteine + H(+). Specifically methylates guanosine-37 in various tRNAs. The chain is tRNA (guanine-N(1)-)-methyltransferase from Trichodesmium erythraeum (strain IMS101).